We begin with the raw amino-acid sequence, 569 residues long: GATOR1 complex protein NPRL3 (569 aa).

Disordered stretches follow at residues 27 to 60 (PFQR…DQDG) and 441 to 476 (TPNA…SGDS). Polar residues-rich tracts occupy residues 34–52 (HPAS…NNTG) and 441–468 (TPNA…NSSA). The residue at position 476 (serine 476) is a Phosphoserine.

It belongs to the NPR3 family. In terms of assembly, within the GATOR complex, component of the GATOR1 subcomplex, made of DEPDC5, NPRL2 and NPRL3. GATOR1 mediates the strong interaction of the GATOR complex with small GTPases Rag (RagA/RRAGA, RagB/RRAGB, RagC/RRAGC and/or RagD/RRAGD) heterodimers. GATOR1 interacts with GPR155/LYCHOS; interaction takes place in presence of cholesterol and prevents interaction between GATOR1 and KICSTOR.

The protein localises to the lysosome membrane. Its function is as follows. As a component of the GATOR1 complex functions as an inhibitor of the amino acid-sensing branch of the mTORC1 pathway. In response to amino acid depletion, the GATOR1 complex has GTPase activating protein (GAP) activity and strongly increases GTP hydrolysis by RagA/RRAGA (or RagB/RRAGB) within heterodimeric Rag complexes, thereby turning them into their inactive GDP-bound form, releasing mTORC1 from lysosomal surface and inhibiting mTORC1 signaling. In the presence of abundant amino acids, the GATOR1 complex is negatively regulated by GATOR2, the other GATOR subcomplex, in this amino acid-sensing branch of the TORC1 pathway. The chain is GATOR1 complex protein NPRL3 from Mus musculus (Mouse).